The chain runs to 605 residues: Mini-chromosome maintenance complex-binding protein (605 aa).

A phosphoserine mark is found at serine 147 and serine 150.

Belongs to the MCMBP family. Interacts with the MCM complex.

The protein resides in the nucleus. Its function is as follows. Associated component of the MCM complex that acts as a regulator of DNA replication. Binds to the MCM complex during late S phase and may act by promoting the disassembly of the MCM complex from chromatin. The polypeptide is Mini-chromosome maintenance complex-binding protein (Drosophila melanogaster (Fruit fly)).